A 334-amino-acid chain; its full sequence is MDLINEKLNNLENNATKSPKEAVILLNMGGPNSLYEVGVFLKNMFDDPFILTIKNNFMRKMVGKMIVNSRIEKSKKIYEKLGGKSPLTPITFALTERLNKLDPSRFYTYAMRYTPPYASMVLQDLALKEVESLVFFSMYPQYSSTTTLSSFNDAFNALKSLETFRPKVRVIERFYASKKLNKIILNTILNTLNNRKSQDFVLIFSVHGLPKSVIDAGDTYQQECEHHVSLLKELMQQKNTPFKEVLLSYQSKLGPMKWLEPSTEELIEKHRKSHIIIYPLAFTIDNSETLYELDMQYRLMAERLAVKEYLVCPCLNDSIEFAQFIIERVKNLKE.

Fe cation-binding residues include H207 and E288.

This sequence belongs to the ferrochelatase family.

It is found in the cytoplasm. The catalysed reaction is heme b + 2 H(+) = protoporphyrin IX + Fe(2+). The protein operates within porphyrin-containing compound metabolism; protoheme biosynthesis; protoheme from protoporphyrin-IX: step 1/1. Catalyzes the ferrous insertion into protoporphyrin IX. This Helicobacter pylori (strain ATCC 700392 / 26695) (Campylobacter pylori) protein is Ferrochelatase.